The chain runs to 63 residues: Large ribosomal subunit protein uL29 (63 aa).

Belongs to the universal ribosomal protein uL29 family.

The protein is Large ribosomal subunit protein uL29 of Flavobacterium psychrophilum (strain ATCC 49511 / DSM 21280 / CIP 103535 / JIP02/86).